The following is a 332-amino-acid chain: Small ribosomal subunit protein uS2 (332 aa).

This sequence belongs to the universal ribosomal protein uS2 family.

The sequence is that of Small ribosomal subunit protein uS2 from Nitrobacter winogradskyi (strain ATCC 25391 / DSM 10237 / CIP 104748 / NCIMB 11846 / Nb-255).